A 256-amino-acid chain; its full sequence is Deoxyribose-phosphate aldolase (256 aa).

The active-site Proton donor/acceptor is Asp-102. The active-site Schiff-base intermediate with acetaldehyde is the Lys-165. Lys-197 functions as the Proton donor/acceptor in the catalytic mechanism.

It belongs to the DeoC/FbaB aldolase family. DeoC type 2 subfamily.

It localises to the cytoplasm. The catalysed reaction is 2-deoxy-D-ribose 5-phosphate = D-glyceraldehyde 3-phosphate + acetaldehyde. The protein operates within carbohydrate degradation; 2-deoxy-D-ribose 1-phosphate degradation; D-glyceraldehyde 3-phosphate and acetaldehyde from 2-deoxy-alpha-D-ribose 1-phosphate: step 2/2. Functionally, catalyzes a reversible aldol reaction between acetaldehyde and D-glyceraldehyde 3-phosphate to generate 2-deoxy-D-ribose 5-phosphate. The polypeptide is Deoxyribose-phosphate aldolase (Shewanella sp. (strain W3-18-1)).